We begin with the raw amino-acid sequence, 205 residues long: Outer-membrane lipoprotein LolB (205 aa).

The signal sequence occupies residues 1–17 (MFLRHVIVFSLIALLTG). Cys18 carries N-palmitoyl cysteine lipidation. A lipid anchor (S-diacylglycerol cysteine) is attached at Cys18.

The protein belongs to the LolB family. Monomer.

It is found in the cell outer membrane. Its function is as follows. Plays a critical role in the incorporation of lipoproteins in the outer membrane after they are released by the LolA protein. The protein is Outer-membrane lipoprotein LolB of Pseudomonas savastanoi pv. phaseolicola (strain 1448A / Race 6) (Pseudomonas syringae pv. phaseolicola (strain 1448A / Race 6)).